A 527-amino-acid polypeptide reads, in one-letter code: MKYIFVTGGVMSGLGKGITAASIGRLLKNRGYQVTAVKIDPYLNIDAGTMNPAQHGEVFVLHDGGEVDLDLGNYERFLDIELNSSHNITTGKVYRMVIDKERRGDYLGQTVQIIPHITDQIKDCIRSAAEEKVFDGKPADICIVEVGGTVGDIESMPFLEAVRQMRSELATADRALVHVTLMPSDSMGDLKTKPTQHSIKALRELGIFTDIIVGRSERPLNSHTKKKLSSLCDIPQNGIISAATAPDIYQVPMELEKEGMADVLCQLLQLRKDGADPEWYRIVTREYTHRITIGIVSKYGKEDVYLSIKEALRHAGRKLSTEVSIRWLDAERVEPADLRECDGVLIPGGFGVRGIEGKINAIRLCREERIPLLGLCLGFQLSVVEFARNVLGIADACSSECGDGTAVITILPEQEGVENLGGTMRLGDCPVEIKSGTIAYKLYRQHEIIERHRHRYEVDPAYISRLEDAGLIFSGRNGNRMEIAEIEDHPFFFATQFHPEFRSRPTSPSPPFLGFVEACLKNRGKGE.

Residues 1-270 (MKYIFVTGGV…ADVLCQLLQL (270 aa)) are amidoligase domain. S12 is a binding site for CTP. S12 provides a ligand contact to UTP. ATP is bound by residues 13–18 (GLGKGI) and D70. Positions 70 and 145 each coordinate Mg(2+). Residues 152–154 (DIE), 191–196 (KTKPTQ), and K227 each bind CTP. UTP is bound by residues 191–196 (KTKPTQ) and K227. Residues 292–525 (TIGIVSKYGK…VEACLKNRGK (234 aa)) enclose the Glutamine amidotransferase type-1 domain. G349 contacts L-glutamine. Residue C376 is the Nucleophile; for glutamine hydrolysis of the active site. L-glutamine is bound by residues 377–380 (LGFQ), E400, and R455. Catalysis depends on residues H498 and E500.

This sequence belongs to the CTP synthase family. Homotetramer.

It catalyses the reaction UTP + L-glutamine + ATP + H2O = CTP + L-glutamate + ADP + phosphate + 2 H(+). The catalysed reaction is L-glutamine + H2O = L-glutamate + NH4(+). The enzyme catalyses UTP + NH4(+) + ATP = CTP + ADP + phosphate + 2 H(+). The protein operates within pyrimidine metabolism; CTP biosynthesis via de novo pathway; CTP from UDP: step 2/2. Its activity is regulated as follows. Allosterically activated by GTP, when glutamine is the substrate; GTP has no effect on the reaction when ammonia is the substrate. The allosteric effector GTP functions by stabilizing the protein conformation that binds the tetrahedral intermediate(s) formed during glutamine hydrolysis. Inhibited by the product CTP, via allosteric rather than competitive inhibition. Its function is as follows. Catalyzes the ATP-dependent amination of UTP to CTP with either L-glutamine or ammonia as the source of nitrogen. Regulates intracellular CTP levels through interactions with the four ribonucleotide triphosphates. In Methanospirillum hungatei JF-1 (strain ATCC 27890 / DSM 864 / NBRC 100397 / JF-1), this protein is CTP synthase.